Consider the following 66-residue polypeptide: Translational regulator CsrA (66 aa).

This sequence belongs to the CsrA/RsmA family. As to quaternary structure, homodimer; the beta-strands of each monomer intercalate to form a hydrophobic core, while the alpha-helices form wings that extend away from the core.

Its subcellular location is the cytoplasm. Its function is as follows. A key translational regulator that binds mRNA to regulate translation initiation and/or mRNA stability. Mediates global changes in gene expression, shifting from rapid growth to stress survival by linking envelope stress, the stringent response and the catabolite repression systems. Usually binds in the 5'-UTR; binding at or near the Shine-Dalgarno sequence prevents ribosome-binding, repressing translation, binding elsewhere in the 5'-UTR can activate translation and/or stabilize the mRNA. Its function is antagonized by small RNA(s). The protein is Translational regulator CsrA of Alkalilimnicola ehrlichii (strain ATCC BAA-1101 / DSM 17681 / MLHE-1).